A 654-amino-acid polypeptide reads, in one-letter code: Marinolic acid--CoA ligase (654 aa).

It belongs to the ATP-dependent AMP-binding enzyme family.

It catalyses the reaction ATP + a marinolic acid + CoA = AMP + diphosphate + a marinoloyl-CoA.. The enzyme catalyses ATP + a pseudomonic acid + CoA = AMP + diphosphate + a pseudomonoyl-CoA.. The catalysed reaction is marinolate C + ATP + CoA = marinoloyl-CoA C + AMP + diphosphate. It carries out the reaction pseudomonate C + ATP + CoA = pseudomonoyl-CoA C + AMP + diphosphate. It functions in the pathway antibiotic biosynthesis. Acyl-CoA ligase that catalyzes the CoA acylation of pseudomonate C, leading to the formation of pseudomonoyl-CoA C (PAC-CoA). Also shows high activity with pseudomonoyl-CoA A as substrate. In addition, can activate acetic, octanoic, 2,4-dodecadienoic and 2,4-decadienoic acids, although with much lower activity. In vivo, is probably involved in the biosynthesis of thiomarinol, a naturally occurring double-headed antibiotic. The protein is Marinolic acid--CoA ligase of Pseudoalteromonas sp. (strain SANK 73390).